Here is a 745-residue protein sequence, read N- to C-terminus: Centromere protein I (745 aa).

Residues 1–27 (MATPRLTRNSQQQNRISQGSNSRQTTL) show a composition bias toward polar residues. Residues 1 to 58 (MATPRLTRNSQQQNRISQGSNSRQTTLLDWKVKDKAGNSKSVLEESSSLEDSNHADDQ) form a disordered region. A compositionally biased stretch (low complexity) spans 39–50 (SKSVLEESSSLE).

Belongs to the CENP-I/CTF3 family. In terms of assembly, component of the CENPA-CAD complex, composed of CENPI, CENPK, CENPL, CENPO, CENPP, CENPQ, CENPR and CENPS. The CENPA-CAD complex interacts with the CENPA-NAC complex, at least composed of CENPA, CENPC, CENPH, CENPM, CENPN, CENPT and CENPU. Interacts with SENP6. In terms of processing, sumoylated. Sumoylated form can be polyubiquitinated by RNF4, leading to its degradation. Desumoylation by SENP6 prevents its degradation. Highly expressed in testis, ovary and spleen. A much lower mRNA level is found in brain and lung, and no expression is detected in liver, kidney, heart, muscle, pituitary gland, prostate, epididymis and seminal vesicle.

The protein localises to the nucleus. The protein resides in the chromosome. It is found in the centromere. Functionally, component of the CENPA-CAD (nucleosome distal) complex, a complex recruited to centromeres which is involved in assembly of kinetochore proteins, mitotic progression and chromosome segregation. May be involved in incorporation of newly synthesized CENPA into centromeres via its interaction with the CENPA-NAC complex. Required for the localization of CENPF, MAD1L1 and MAD2 (MAD2L1 or MAD2L2) to kinetochores. Involved in the response of gonadal tissues to follicle-stimulating hormone. The chain is Centromere protein I (Cenpi) from Rattus norvegicus (Rat).